Here is a 70-residue protein sequence, read N- to C-terminus: Small ribosomal subunit protein bS21 (70 aa).

This sequence belongs to the bacterial ribosomal protein bS21 family.

This is Small ribosomal subunit protein bS21 from Delftia acidovorans (strain DSM 14801 / SPH-1).